The following is a 210-amino-acid chain: 3-hexulose-6-phosphate synthase (210 aa).

It belongs to the HPS/KGPDC family. HPS subfamily.

It carries out the reaction D-ribulose 5-phosphate + formaldehyde = D-arabino-hex-3-ulose 6-phosphate. The protein operates within one-carbon metabolism; formaldehyde assimilation via RuMP pathway; D-fructose 6-phosphate from D-ribulose 5-phosphate and formaldehyde: step 1/2. In terms of biological role, catalyzes the condensation of ribulose 5-phosphate with formaldehyde to form 3-hexulose 6-phosphate. This chain is 3-hexulose-6-phosphate synthase, found in Staphylococcus epidermidis (strain ATCC 12228 / FDA PCI 1200).